A 515-amino-acid polypeptide reads, in one-letter code: Brahma-associated protein of 60 kDa (515 aa).

The disordered stretch occupies residues methionine 1–alanine 124. Residues glutamine 17–serine 34 are compositionally biased toward pro residues. Residues proline 49–valine 62 are compositionally biased toward low complexity. Over residues threonine 90–serine 103 the composition is skewed to gly residues. The tract at residues glycine 116–glutamate 204 is DNA-binding. In terms of domain architecture, SWIB/MDM2 spans tyrosine 291 to proline 368.

There are 2 distinct Brahma complexes in the fruit fly, the Brahma-associated proteins (BAP) and Polybromo-containing BAP (PBAP) complexes, which are composed of common subunits Brm, Mor, Snr1/Bap45, Bap111/Dalo, Bap55, Bap60 and Act42A/Bap47, and additional signature subunits osa in the BAP complex and Polybromo and Bap170 in the PBAP complex. Interacts with sisA and sc. Interacts with mor. Interacts with p53. Interacts with erm (via N-terminal). Interacts with akirin; interaction is immune stimulation-dependent; activates selected Rel target gene promoters.

Functionally, involved in the recruitment and site-specific anchoring of the Brahma complex at specific promoter sites. The Brahma complex is a multiprotein complex which is the equivalent of the yeast SWI/SNF complex and acts by remodeling the chromatin by catalyzing an ATP-dependent alteration in the structure of nucleosomal DNA. This complex can both serve as a transcriptional coactivator or corepressor, depending on the context. Participates in X-chromosomal dosage compensation. Participates in neurogenesis. The polypeptide is Brahma-associated protein of 60 kDa (Bap60) (Drosophila melanogaster (Fruit fly)).